Reading from the N-terminus, the 311-residue chain is UDP-N-acetylenolpyruvoylglucosamine reductase (311 aa).

Residues 29–191 (IGGKADIVLK…LSARLKLKPI (163 aa)) form the FAD-binding PCMH-type domain. Arginine 172 is a catalytic residue. Residue serine 223 is the Proton donor of the active site. Glutamate 299 is a catalytic residue.

The protein belongs to the MurB family. It depends on FAD as a cofactor.

The protein localises to the cytoplasm. It carries out the reaction UDP-N-acetyl-alpha-D-muramate + NADP(+) = UDP-N-acetyl-3-O-(1-carboxyvinyl)-alpha-D-glucosamine + NADPH + H(+). It participates in cell wall biogenesis; peptidoglycan biosynthesis. Functionally, cell wall formation. In Chloroherpeton thalassium (strain ATCC 35110 / GB-78), this protein is UDP-N-acetylenolpyruvoylglucosamine reductase.